Consider the following 355-residue polypeptide: 3-dehydroquinate synthase (355 aa).

NAD(+) is bound by residues 71–76, 105–109, 129–130, lysine 142, and lysine 151; these read EGEASK, GVVGD, and TS. Residues glutamate 184, histidine 246, and histidine 263 each coordinate Zn(2+).

Belongs to the sugar phosphate cyclases superfamily. Dehydroquinate synthase family. Requires Co(2+) as cofactor. Zn(2+) is required as a cofactor. The cofactor is NAD(+).

The protein resides in the cytoplasm. The catalysed reaction is 7-phospho-2-dehydro-3-deoxy-D-arabino-heptonate = 3-dehydroquinate + phosphate. Its pathway is metabolic intermediate biosynthesis; chorismate biosynthesis; chorismate from D-erythrose 4-phosphate and phosphoenolpyruvate: step 2/7. Catalyzes the conversion of 3-deoxy-D-arabino-heptulosonate 7-phosphate (DAHP) to dehydroquinate (DHQ). This is 3-dehydroquinate synthase from Streptococcus sanguinis (strain SK36).